The chain runs to 482 residues: Anaerobic nitric oxide reductase flavorubredoxin (482 aa).

The tract at residues Leu30 to Ile210 is zinc metallo-hydrolase. The Fe cation site is built by His79, Glu81, Asp83, His147, Asp166, and His227. The 140-residue stretch at Ile254–Ala393 folds into the Flavodoxin-like domain. FMN contacts are provided by residues Thr260 to Asn264 and Ala342 to Leu369. The Rubredoxin-like domain occupies Gly426–Leu477. Cys431, Cys434, Cys464, and Cys467 together coordinate Fe cation.

It in the N-terminal section; belongs to the zinc metallo-hydrolase group 3 family. As to quaternary structure, homotetramer. The cofactor is Fe cation. It depends on FMN as a cofactor.

It localises to the cytoplasm. It functions in the pathway nitrogen metabolism; nitric oxide reduction. Its function is as follows. Anaerobic nitric oxide reductase; uses NADH to detoxify nitric oxide (NO), protecting several 4Fe-4S NO-sensitive enzymes. Has at least 2 reductase partners, only one of which (NorW, flavorubredoxin reductase) has been identified. NO probably binds to the di-iron center; electrons enter from the NorW at rubredoxin and are transferred sequentially to the FMN center and the di-iron center. Also able to function as an aerobic oxygen reductase. The sequence is that of Anaerobic nitric oxide reductase flavorubredoxin from Klebsiella pneumoniae subsp. pneumoniae (strain ATCC 700721 / MGH 78578).